A 275-amino-acid chain; its full sequence is Pyrroline-5-carboxylate reductase (275 aa).

The protein belongs to the pyrroline-5-carboxylate reductase family.

The protein localises to the cytoplasm. The catalysed reaction is L-proline + NADP(+) = (S)-1-pyrroline-5-carboxylate + NADPH + 2 H(+). It carries out the reaction L-proline + NAD(+) = (S)-1-pyrroline-5-carboxylate + NADH + 2 H(+). It participates in amino-acid biosynthesis; L-proline biosynthesis; L-proline from L-glutamate 5-semialdehyde: step 1/1. Catalyzes the reduction of 1-pyrroline-5-carboxylate (PCA) to L-proline. The sequence is that of Pyrroline-5-carboxylate reductase from Pasteurella multocida (strain Pm70).